Consider the following 366-residue polypeptide: Spermidine/putrescine import ATP-binding protein PotA (366 aa).

Residues 8-239 (IRFENVTKQF…PINKFVADFI (232 aa)) form the ABC transporter domain. 41–48 (GPSGCGKT) is a binding site for ATP.

Belongs to the ABC transporter superfamily. Spermidine/putrescine importer (TC 3.A.1.11.1) family. In terms of assembly, the complex is composed of two ATP-binding proteins (PotA), two transmembrane proteins (PotB and PotC) and a solute-binding protein (PotD).

Its subcellular location is the cell membrane. It catalyses the reaction ATP + H2O + polyamine-[polyamine-binding protein]Side 1 = ADP + phosphate + polyamineSide 2 + [polyamine-binding protein]Side 1.. Part of the ABC transporter complex PotABCD involved in spermidine/putrescine import. Responsible for energy coupling to the transport system. The sequence is that of Spermidine/putrescine import ATP-binding protein PotA from Listeria innocua serovar 6a (strain ATCC BAA-680 / CLIP 11262).